Consider the following 334-residue polypeptide: Thioredoxin reductase (334 aa).

Residues 10-13, 39-40, Q44, N53, V86, C143, D287, and 294-296 each bind FAD; these read SGPA, IA, and RQA. An intrachain disulfide couples C140 to C143.

The protein belongs to the class-II pyridine nucleotide-disulfide oxidoreductase family. Homodimer. The cofactor is FAD.

It is found in the cytoplasm. It carries out the reaction [thioredoxin]-dithiol + NADP(+) = [thioredoxin]-disulfide + NADPH + H(+). The protein is Thioredoxin reductase (cys-9) of Neurospora crassa (strain ATCC 24698 / 74-OR23-1A / CBS 708.71 / DSM 1257 / FGSC 987).